A 232-amino-acid chain; its full sequence is Clarin-2 (232 aa).

The chain crosses the membrane as a helical span at residues 10–30; the sequence is YGLASLLSFSSFILIIVALVV. N-linked (GlcNAc...) asparagine glycosylation is present at Asn-48. Transmembrane regions (helical) follow at residues 101–121, 139–159, and 188–208; these read ILLL…FAIL, LWNV…VAAV, and SFWI…VVAI.

This sequence belongs to the clarin family.

It is found in the cell projection. Its subcellular location is the stereocilium membrane. Functionally, plays a key role to hearing function. Required for normal organization and maintenance of the stereocilia bundle and for mechano-electrical transduction. The protein is Clarin-2 of Homo sapiens (Human).